The primary structure comprises 337 residues: 1-aminocyclopropane-1-carboxylate deaminase (337 aa).

Residue K50 is modified to N6-(pyridoxal phosphate)lysine. S77 serves as the catalytic Nucleophile.

The protein belongs to the ACC deaminase/D-cysteine desulfhydrase family. In terms of assembly, homotrimer. It depends on pyridoxal 5'-phosphate as a cofactor.

It catalyses the reaction 1-aminocyclopropane-1-carboxylate + H2O = 2-oxobutanoate + NH4(+). Catalyzes a cyclopropane ring-opening reaction, the irreversible conversion of 1-aminocyclopropane-1-carboxylate (ACC) to ammonia and alpha-ketobutyrate. Allows growth on ACC as a nitrogen source. The polypeptide is 1-aminocyclopropane-1-carboxylate deaminase (Rhizobium rhizogenes (strain K84 / ATCC BAA-868) (Agrobacterium radiobacter)).